Here is a 1165-residue protein sequence, read N- to C-terminus: Immunoglobulin superfamily member 3 (1165 aa).

The N-terminal stretch at 1–20 (MGTAAGLLLAALLLAGTSWA) is a signal peptide. Residues 21 to 1095 (QREVNIQQGP…LQSTICANDA (1075 aa)) are Extracellular-facing. Ig-like C2-type domains follow at residues 22 to 139 (REVN…AKMN), 144 to 262 (PDTL…WFPL), 276 to 386 (PTDK…RGPS), 406 to 527 (PLRT…WQLL), 545 to 661 (FAVT…WTQL), 678 to 800 (PRLQ…EEAS), 810 to 934 (PDAN…WYKR), and 951 to 1067 (PALQ…WYLL). 2 cysteine pairs are disulfide-bonded: cysteine 43-cysteine 121 and cysteine 168-cysteine 246. Positions 250 to 252 (EWI) match the EWI motif motif. 6 cysteine pairs are disulfide-bonded: cysteine 302/cysteine 376, cysteine 432/cysteine 511, cysteine 566/cysteine 645, cysteine 701/cysteine 779, cysteine 835/cysteine 918, and cysteine 974/cysteine 1051. The chain crosses the membrane as a helical span at residues 1096-1116 (LFYLVFFYPFPIFGILIITIL). Over 1117 to 1165 (LVRFRHRPTSKPGEGKNGVPLLWIKEPHLNYSPTCLEPPVLSIHPGTID) the chain is Cytoplasmic.

It localises to the membrane. The protein is Immunoglobulin superfamily member 3 (igsf3) of Xenopus laevis (African clawed frog).